We begin with the raw amino-acid sequence, 137 residues long: Methylglyoxal synthase (137 aa).

The MGS-like domain occupies 1-137 (MKIALIAHDK…NLVRGGEPNV (137 aa)). Substrate contacts are provided by residues His8, Lys12, 34–37 (TGTT), and 54–55 (SG). Asp60 acts as the Proton donor/acceptor in catalysis. His87 is a binding site for substrate.

Belongs to the methylglyoxal synthase family.

It carries out the reaction dihydroxyacetone phosphate = methylglyoxal + phosphate. Its function is as follows. Catalyzes the formation of methylglyoxal from dihydroxyacetone phosphate. This Bacillus velezensis (strain DSM 23117 / BGSC 10A6 / LMG 26770 / FZB42) (Bacillus amyloliquefaciens subsp. plantarum) protein is Methylglyoxal synthase.